A 550-amino-acid polypeptide reads, in one-letter code: Glucose-6-phosphate isomerase (550 aa).

Glu-356 serves as the catalytic Proton donor. Residues His-387 and Lys-515 contribute to the active site.

The protein belongs to the GPI family.

The protein localises to the cytoplasm. The catalysed reaction is alpha-D-glucose 6-phosphate = beta-D-fructose 6-phosphate. The protein operates within carbohydrate biosynthesis; gluconeogenesis. It functions in the pathway carbohydrate degradation; glycolysis; D-glyceraldehyde 3-phosphate and glycerone phosphate from D-glucose: step 2/4. Functionally, catalyzes the reversible isomerization of glucose-6-phosphate to fructose-6-phosphate. The protein is Glucose-6-phosphate isomerase of Vibrio parahaemolyticus serotype O3:K6 (strain RIMD 2210633).